The chain runs to 275 residues: Acetyl-coenzyme A carboxylase carboxyl transferase subunit beta (275 aa).

Positions 18–275 constitute a CoA carboxyltransferase N-terminal domain; the sequence is KDNAGPAVPS…IHRLGGEMHA (258 aa). Residues 23–47 are disordered; sequence PAVPSNTHSSKSNGNPVSEMKENKR. The span at 26–38 shows a compositional bias: polar residues; that stretch reads PSNTHSSKSNGNP.

The protein belongs to the AccD/PCCB family. As to quaternary structure, acetyl-CoA carboxylase is a heterohexamer composed of biotin carboxyl carrier protein (AccB), biotin carboxylase (AccC) and two subunits each of ACCase subunit alpha (AccA) and ACCase subunit beta (AccD).

It localises to the cytoplasm. It catalyses the reaction N(6)-carboxybiotinyl-L-lysyl-[protein] + acetyl-CoA = N(6)-biotinyl-L-lysyl-[protein] + malonyl-CoA. It participates in lipid metabolism; malonyl-CoA biosynthesis; malonyl-CoA from acetyl-CoA: step 1/1. Component of the acetyl coenzyme A carboxylase (ACC) complex. Biotin carboxylase (BC) catalyzes the carboxylation of biotin on its carrier protein (BCCP) and then the CO(2) group is transferred by the transcarboxylase to acetyl-CoA to form malonyl-CoA. The protein is Acetyl-coenzyme A carboxylase carboxyl transferase subunit beta of Alkaliphilus oremlandii (strain OhILAs) (Clostridium oremlandii (strain OhILAs)).